The primary structure comprises 535 residues: Nuclear/nucleolar GTPase 2 (535 aa).

Residues 1 to 42 are disordered; that stretch reads MAKKKERAVNVSGKPRHSLDVNRANDKKGAGGGAGGGGGGRS. Residues 17–29 are compositionally biased toward basic and acidic residues; that stretch reads HSLDVNRANDKKG. Gly residues predominate over residues 30 to 41; it reads AGGGAGGGGGGR. In terms of domain architecture, CP-type G spans 213–374; that stretch reads WGELYKVIDS…LIDCPGVVYQ (162 aa). A G4 region spans residues 261-264; that stretch reads NKCD. The interval 290 to 292 is G5; that stretch reads SIN. The G1 stretch occupies residues 323-330; it reads GYPNVGKS. Positions 349–353 are G2; the sequence is GETKV. The tract at residues 367-370 is G3; the sequence is DCPG. The interval 464 to 495 is disordered; sequence FFVPPPQQGEDSPSETAEPVDKSDEEGVSSDR.

It belongs to the TRAFAC class YlqF/YawG GTPase family. RsgA subfamily.

Its subcellular location is the nucleus. It localises to the nucleolus. In terms of biological role, GTPase involved in pre-60S ribosomal subunit maturation. This Oryza sativa subsp. indica (Rice) protein is Nuclear/nucleolar GTPase 2.